We begin with the raw amino-acid sequence, 169 residues long: Endoribonuclease YbeY (169 aa).

Residues His-128, His-132, and His-138 each contribute to the Zn(2+) site.

Belongs to the endoribonuclease YbeY family. Zn(2+) is required as a cofactor.

Its subcellular location is the cytoplasm. Functionally, single strand-specific metallo-endoribonuclease involved in late-stage 70S ribosome quality control and in maturation of the 3' terminus of the 16S rRNA. The protein is Endoribonuclease YbeY of Rhizorhabdus wittichii (strain DSM 6014 / CCUG 31198 / JCM 15750 / NBRC 105917 / EY 4224 / RW1) (Sphingomonas wittichii).